The sequence spans 215 residues: Rod-determining factor A (215 aa).

In terms of biological role, involved in cell-shape determination. Required for the formation of rods and wild-type-like motility. The protein is Rod-determining factor A of Haloferax volcanii (strain ATCC 29605 / DSM 3757 / JCM 8879 / NBRC 14742 / NCIMB 2012 / VKM B-1768 / DS2) (Halobacterium volcanii).